Here is a 280-residue protein sequence, read N- to C-terminus: Protoheme IX farnesyltransferase (280 aa).

9 consecutive transmembrane segments (helical) span residues valine 2–leucine 21, alanine 30–glycine 50, leucine 83–valine 103, alanine 105–leucine 125, leucine 131–valine 151, phenylalanine 160–phenylalanine 180, isoleucine 206–alanine 226, valine 229–leucine 249, and glutamine 260–alanine 280.

This sequence belongs to the UbiA prenyltransferase family. Protoheme IX farnesyltransferase subfamily.

It is found in the cell inner membrane. It carries out the reaction heme b + (2E,6E)-farnesyl diphosphate + H2O = Fe(II)-heme o + diphosphate. It participates in porphyrin-containing compound metabolism; heme O biosynthesis; heme O from protoheme: step 1/1. Converts heme B (protoheme IX) to heme O by substitution of the vinyl group on carbon 2 of heme B porphyrin ring with a hydroxyethyl farnesyl side group. This is Protoheme IX farnesyltransferase from Sorangium cellulosum (strain So ce56) (Polyangium cellulosum (strain So ce56)).